The primary structure comprises 35 residues: Leukocyte cysteine proteinase inhibitor 2 (35 aa).

The interval 1–35 (LAGGLTEPRPADTEIQEIANKVKPQLEEKTNKKYD) is disordered. Basic and acidic residues predominate over residues 24 to 35 (PQLEEKTNKKYD).

Belongs to the cystatin family.

The protein localises to the cytoplasm. Functionally, potent inhibitor of cathepsins L and S, and papain. This chain is Leukocyte cysteine proteinase inhibitor 2, found in Sus scrofa (Pig).